Consider the following 51-residue polypeptide: uncharacterized protein (51 aa).

This is an uncharacterized protein from Saccharomyces cerevisiae (strain ATCC 204508 / S288c) (Baker's yeast).